We begin with the raw amino-acid sequence, 179 residues long: MTSRLQVIQGDITQLSVDAIVNAANASLMGGGGVDGAIHRAAGPALLDACKLIRQQQGECQTGHAVITPAGKLSAKAVIHTVGPVWRGGEHQEAELLEEAYRNCLLLAEANHFRSIAFPAISTGVYGYPRAQAAEIAVRTVSDFITRYALPEQVYFVCYDEETARLYARLLTQQGDDPA.

The 175-residue stretch at 1 to 175 (MTSRLQVIQG…LYARLLTQQG (175 aa)) folds into the Macro domain. Residues 11-12 (DI), Asn-25, 33-35 (GVD), and 122-126 (STGVY) contribute to the substrate site. The active-site Proton acceptor is the Asp-35.

This sequence belongs to the MacroD-type family. YmdB subfamily. As to quaternary structure, homodimer. Interacts with RNase III.

The catalysed reaction is 3''-O-acetyl-ADP-D-ribose + H2O = ADP-D-ribose + acetate + H(+). It carries out the reaction 2''-O-acetyl-ADP-D-ribose + H2O = ADP-D-ribose + acetate + H(+). Deacetylates O-acetyl-ADP ribose to yield ADP-ribose and free acetate. Down-regulates ribonuclease 3 (RNase III) activity. Acts by interacting directly with the region of the ribonuclease that is required for dimerization/activation. The polypeptide is O-acetyl-ADP-ribose deacetylase (Salmonella newport (strain SL254)).